A 505-amino-acid chain; its full sequence is Cytochrome P450 71A2 (505 aa).

The helical transmembrane segment at 7–27 (WYSLLIPLFVFIFLLIHHCFF) threads the bilayer. Cysteine 448 lines the heme pocket.

It belongs to the cytochrome P450 family. The cofactor is heme.

The protein localises to the membrane. Functionally, may have a role in maturation, such as during flavor formation or other metabolite production specific to aging tissues. In Solanum melongena (Eggplant), this protein is Cytochrome P450 71A2 (CYP71A2).